Consider the following 174-residue polypeptide: Adipose-secreted signaling protein (174 aa).

Belongs to the ADISSP family.

Its subcellular location is the secreted. Its function is as follows. May be involved in thermogenesis and glucose homeostasis. The chain is Adipose-secreted signaling protein from Xenopus tropicalis (Western clawed frog).